A 259-amino-acid polypeptide reads, in one-letter code: Ferritin-2, chloroplastic (259 aa).

Residues 1-52 (MLLKLAPAFTLLNSHGENLSPMLSTSSQGFVLKNFSTKSRNGLLVVCASKGS) constitute a chloroplast transit peptide. The tract at residues 53-85 (NTKPLTGVVFEPFEEVKKELMLVPTVPQVSLAR) is extension peptide (EP). The 154-residue stretch at 86-239 (HKYSDQCEAA…EYVAQLRRVG (154 aa)) folds into the Ferritin-like diiron domain. 4 residues coordinate Fe cation: E103, E138, H141, and Q221.

This sequence belongs to the ferritin family. Oligomer of 24 subunits. There are two types of subunits: L (light) chain and H (heavy) chain. The major chain can be light or heavy, depending on the species and tissue type. The functional molecule forms a roughly spherical shell with a diameter of 12 nm and contains a central cavity into which the insoluble mineral iron core is deposited.

Its subcellular location is the plastid. The protein localises to the chloroplast. It catalyses the reaction 4 Fe(2+) + O2 + 4 H(+) = 4 Fe(3+) + 2 H2O. Functionally, stores iron in a soluble, non-toxic, readily available form. Important for iron homeostasis. Has ferroxidase activity. Iron is taken up in the ferrous form and deposited as ferric hydroxides after oxidation. This Nicotiana tabacum (Common tobacco) protein is Ferritin-2, chloroplastic (FER2).